Consider the following 236-residue polypeptide: Small ribosomal subunit protein uS2c (236 aa).

Belongs to the universal ribosomal protein uS2 family.

It localises to the plastid. The protein localises to the chloroplast. In Piper cenocladum (Ant piper), this protein is Small ribosomal subunit protein uS2c (rps2).